Here is a 405-residue protein sequence, read N- to C-terminus: Deoxyguanosinetriphosphate triphosphohydrolase-like protein (405 aa).

One can recognise an HD domain in the interval 75–219 (RLTHTIEVAQ…AAIADDIAYN (145 aa)).

The protein belongs to the dGTPase family. Type 2 subfamily.

In Rhizobium etli (strain ATCC 51251 / DSM 11541 / JCM 21823 / NBRC 15573 / CFN 42), this protein is Deoxyguanosinetriphosphate triphosphohydrolase-like protein.